Reading from the N-terminus, the 302-residue chain is Short-chain dehydrogenase/reductase 3 (302 aa).

Helical transmembrane passes span 9–29, 170–190, 195–215, and 253–273; these read LVMFPLQMIYLVVKAAVGLVL, IVCLNSVLALSAIPGAIDYCT, AFAFMESLTLGLLDCPGVSAT, and AVQLNQALLLLPWTMHALVIL. Residue Ser-175 coordinates substrate. The active-site Proton acceptor is Tyr-188.

This sequence belongs to the short-chain dehydrogenases/reductases (SDR) family. In terms of tissue distribution, widely expressed with highest levels found in heart, placenta, lung, liver, kidney, pancreas, thyroid, testis, stomach, trachea and spinal cord. Lower levels found in skeletal muscle, intestine and lymph node. No expression detected in brain. In the retina, expressed in cone but not rod outer segments.

It is found in the membrane. It catalyses the reaction all-trans-retinol + NADP(+) = all-trans-retinal + NADPH + H(+). Functionally, catalyzes the reduction of all-trans-retinal to all-trans-retinol in the presence of NADPH. The chain is Short-chain dehydrogenase/reductase 3 (DHRS3) from Homo sapiens (Human).